Here is an 87-residue protein sequence, read N- to C-terminus: Spermatid-specific protein S1 (87 aa).

A disordered region spans residues 1–36; the sequence is TKSRYRNRRSRPRRRYGRRMRKTRCRRKGRRISRRP.

Its subcellular location is the nucleus. It localises to the chromosome. Functionally, involved in nuclear basic protein transition: histones are replaced by spermatid specific proteins which are themselves replaced by protamines in late spermatids. The polypeptide is Spermatid-specific protein S1 (Scyliorhinus canicula (Small-spotted catshark)).